The primary structure comprises 1308 residues: MKPATGLWVWVSLLVAAGTVQPSDSQSVCAGTENKLSSLSDLEQQYRALRKYYENCEVVMGNLEITSIEHNRDLSFLRSVREVTGYVLVALNQFRYLPLENLRIIRGTKLYEDRYALAIFLNYRKDGNFGLQELGLKNLTEILNGGVYVDQNKFLCYADTIHWQDIVRNPWPSNLTLVSTNGSSGCGRCHKSCTGRCWGPTENHCQTLTRTVCAEQCDGRCYGPYVSDCCHRECAGGCSGPKDTDCFACMNFNDSGACVTQCPQTFVYNPTTFQLEHNFNAKYTYGAFCVKKCPHNFVVDSSSCVRACPSSKMEVEENGIKMCKPCTDICPKACDGIGTGSLMSAQTVDSSNIDKFINCTKINGNLIFLVTGIHGDPYNAIEAIDPEKLNVFRTVREITGFLNIQSWPPNMTDFSVFSNLVTIGGRVLYSGLSLLILKQQGITSLQFQSLKEISAGNIYITDNSNLCYYHTINWTTLFSTINQRIVIRDNRKAENCTAEGMVCNHLCSSDGCWGPGPDQCLSCRRFSRGRICIESCNLYDGEFREFENGSICVECDPQCEKMEDGLLTCHGPGPDNCTKCSHFKDGPNCVEKCPDGLQGANSFIFKYADPDRECHPCHPNCTQGCNGPTSHDCIYYPWTGHSTLPQHARTPLIAAGVIGGLFILVIVGLTFAVYVRRKSIKKKRALRRFLETELVEPLTPSGTAPNQAQLRILKETELKRVKVLGSGAFGTVYKGIWVPEGETVKIPVAIKILNETTGPKANVEFMDEALIMASMDHPHLVRLLGVCLSPTIQLVTQLMPHGCLLEYVHEHKDNIGSQLLLNWCVQIAKGMMYLEERRLVHRDLAARNVLVKSPNHVKITDFGLARLLEGDEKEYNADGGKMPIKWMALECIHYRKFTHQSDVWSYGVTIWELMTFGGKPYDGIPTREIPDLLEKGERLPQPPICTIDVYMVMVKCWMIDADSRPKFKELAAEFSRMARDPQRYLVIQGDDRMKLPSPNDSKFFQNLLDEEDLEDMMDAEEYLVPQAFNIPPPIYTSRARIDSNRSEIGHSPPPAYTPMSGNQFVYRDGGFAAEQGVSVPYRAPTSTIPEAPVAQGATAEIFDDSCCNGTLRKPVAPHVQEDSSTQRYSADPTVFAPERSPRGELDEEGYMTPMRDKPKQEYLNPVEENPFVSRRKNGDLQALDNPEYHNASNGPPKAEDEYVNEPLYLNTFANTLGKAEYLKNNILSMPEKAKKAFDNPDYWNHSLPPRSTLQHPDYLQEYSTKYFYKQNGRIRPIVAENPEYLSEFSLKPGTVLPPPPYRHRNTVV.

Positions 1-25 (MKPATGLWVWVSLLVAAGTVQPSDS) are cleaved as a signal peptide. The Extracellular portion of the chain corresponds to 26 to 651 (QSVCAGTENK…STLPQHARTP (626 aa)). Cys29 and Cys56 are disulfide-bonded. Asn138, Asn174, and Asn181 each carry an N-linked (GlcNAc...) asparagine glycan. 12 disulfide bridges follow: Cys156–Cys186, Cys189–Cys197, Cys193–Cys205, Cys213–Cys221, Cys217–Cys229, Cys230–Cys238, Cys234–Cys246, Cys249–Cys258, Cys262–Cys289, Cys293–Cys304, Cys308–Cys323, and Cys326–Cys330. Asn253 carries N-linked (GlcNAc...) asparagine glycosylation. N-linked (GlcNAc...) asparagine glycosylation is found at Asn358, Asn410, Asn473, and Asn495. Cystine bridges form between Cys503–Cys512, Cys507–Cys520, Cys523–Cys532, Cys536–Cys552, Cys555–Cys569, Cys559–Cys577, Cys580–Cys589, Cys593–Cys614, Cys617–Cys625, and Cys621–Cys633. The N-linked (GlcNAc...) asparagine glycan is linked to Asn548. The N-linked (GlcNAc...) asparagine glycan is linked to Asn576. Asn620 carries N-linked (GlcNAc...) asparagine glycosylation. The helical transmembrane segment at 652-675 (LIAAGVIGGLFILVIVGLTFAVYV) threads the bilayer. A Nuclear localization signal motif is present at residues 676-684 (RRKSIKKKR). Topologically, residues 676 to 1308 (RRKSIKKKRA…PPYRHRNTVV (633 aa)) are cytoplasmic. The 268-residue stretch at 718–985 (LKRVKVLGSG…RMARDPQRYL (268 aa)) folds into the Protein kinase domain. ATP is bound by residues 724–732 (LGSGAFGTV), Lys751, 797–799 (QLM), and 843–848 (DLAARN). The Proton acceptor role is filled by Asp843. Phosphotyrosine; by autocatalysis is present on residues Tyr875, Tyr1035, Tyr1056, Tyr1150, Tyr1162, Tyr1188, Tyr1202, Tyr1242, Tyr1258, and Tyr1284. 2 short sequence motifs (PPxY motif) span residues 1032 to 1035 (PPIY) and 1053 to 1056 (PPAY). Positions 1117-1150 (PHVQEDSSTQRYSADPTVFAPERSPRGELDEEGY) are disordered. The PPxY motif 3 motif lies at 1298–1301 (PPPY). Positions 1306–1308 (TVV) match the PDZ-binding motif.

This sequence belongs to the protein kinase superfamily. Tyr protein kinase family. EGF receptor subfamily. Monomer in the absence of bound ligand. Homodimer or heterodimer with another ERBB family member upon ligand binding, thus forming heterotetramers. Interacts with EGFR and ERBB2. Interacts with CBFA2T3. Interacts with DLG2 (via its PDZ domain), DLG3 (via its PDZ domain), DLG4 (via its PDZ domain) and SNTB2 (via its PDZ domain). Interacts with MUC1. Interacts (via its PPxy motifs) with WWOX. Interacts (via the PPxY motif 3 of isoform JM-A CYT-2) with YAP1 (via the WW domain 1 of isoform 1). Interacts (isoform JM-A CYT-1 and isoform JM-B CYT-1) with WWP1. Interacts (via its intracellular domain) with TRIM28. Interacts (via the intracellular domains of both CYT-1 and CYT-2 isoforms) with KAP1; the interaction does not phosphorylate KAP1 but represses ERBB4-mediated transcriptional activity. Interacts with PRPU, DDX23, MATR3, RBM15, ILF3, KAP1, U5S1, U2SURP, ITCH, HNRNPU, AP2A1, NULC, LEO1, WWP2, IGHG1, HXK1, GRB7 and SRRT. Interacts (phosphorylated isoform JM-A CYT-1 and isoform JM-B CYT-1) with PIK3R1. Interacts with SHC1. Interacts with GRB2. Interacts (soluble intracellular domain) with STAT5A. Interacts (soluble intracellular domain) with BCL2. Interacts (phosphorylated) with STAT1. In terms of processing, isoform JM-A CYT-1 and isoform JM-A CYT-2 are processed by ADAM17. Proteolytic processing in response to ligand or 12-O-tetradecanoylphorbol-13-acetate stimulation results in the production of 120 kDa soluble receptor forms and intermediate membrane-anchored 80 kDa fragments (m80HER4), which are further processed by a presenilin-dependent gamma-secretase to release a cytoplasmic intracellular domain (E4ICD; E4ICD1/s80Cyt1 or E4ICD2/s80Cyt2, depending on the isoform). Membrane-anchored 80 kDa fragments of the processed isoform JM-A CYT-1 are more readily degraded by the proteasome than fragments of isoform JM-A CYT-2, suggesting a prevalence of E4ICD2 over E4ICD1. Isoform JM-B CYT-1 and isoform JM-B CYT-2 lack the ADAM17 cleavage site and are not processed by ADAM17, precluding further processing by gamma-secretase. Autophosphorylated on tyrosine residues in response to ligand binding. Autophosphorylation occurs in trans, i.e. one subunit of the dimeric receptor phosphorylates tyrosine residues on the other subunit. Ligands trigger phosphorylation at specific tyrosine residues, thereby creating binding sites for scaffold proteins and effectors. Constitutively phosphorylated at a basal level when overexpressed in heterologous systems; ligand binding leads to increased phosphorylation. Phosphorylation at Tyr-1035 is important for interaction with STAT1. Phosphorylation at Tyr-1056 is important for interaction with PIK3R1. Phosphorylation at Tyr-1242 is important for interaction with SHC1. Phosphorylation at Tyr-1188 may also contribute to the interaction with SHC1. Isoform JM-A CYT-2 is constitutively phosphorylated on tyrosine residues in a ligand-independent manner. E4ICD2 but not E4ICD1 is phosphorylated on tyrosine residues. Post-translationally, ubiquitinated. During mitosis, the ERBB4 intracellular domain is ubiquitinated by the APC/C complex and targeted to proteasomal degradation. Isoform JM-A CYT-1 and isoform JM-B CYT-1 are ubiquitinated by WWP1. The ERBB4 intracellular domain (E4ICD1) is ubiquitinated, and this involves NEDD4. Expressed at highest levels in brain, heart, kidney, in addition to skeletal muscle, parathyroid, cerebellum, pituitary, spleen, testis and breast. Lower levels in thymus, lung, salivary gland, and pancreas. Isoform JM-A CYT-1 and isoform JM-B CYT-1 are expressed in cerebellum, but only the isoform JM-B is expressed in the heart.

It localises to the cell membrane. Its subcellular location is the nucleus. The protein resides in the mitochondrion. It catalyses the reaction L-tyrosyl-[protein] + ATP = O-phospho-L-tyrosyl-[protein] + ADP + H(+). Its activity is regulated as follows. Binding of a cognate ligand leads to dimerization and activation by autophosphorylation on tyrosine residues. In vitro kinase activity is increased by Mg(2+). Inhibited by PD153035, lapatinib, gefitinib (iressa, ZD1839), AG1478 and BIBX1382BS. In terms of biological role, tyrosine-protein kinase that plays an essential role as cell surface receptor for neuregulins and EGF family members and regulates development of the heart, the central nervous system and the mammary gland, gene transcription, cell proliferation, differentiation, migration and apoptosis. Required for normal cardiac muscle differentiation during embryonic development, and for postnatal cardiomyocyte proliferation. Required for normal development of the embryonic central nervous system, especially for normal neural crest cell migration and normal axon guidance. Required for mammary gland differentiation, induction of milk proteins and lactation. Acts as cell-surface receptor for the neuregulins NRG1, NRG2, NRG3 and NRG4 and the EGF family members BTC, EREG and HBEGF. Ligand binding triggers receptor dimerization and autophosphorylation at specific tyrosine residues that then serve as binding sites for scaffold proteins and effectors. Ligand specificity and signaling is modulated by alternative splicing, proteolytic processing, and by the formation of heterodimers with other ERBB family members, thereby creating multiple combinations of intracellular phosphotyrosines that trigger ligand- and context-specific cellular responses. Mediates phosphorylation of SHC1 and activation of the MAP kinases MAPK1/ERK2 and MAPK3/ERK1. Isoform JM-A CYT-1 and isoform JM-B CYT-1 phosphorylate PIK3R1, leading to the activation of phosphatidylinositol 3-kinase and AKT1 and protect cells against apoptosis. Isoform JM-A CYT-1 and isoform JM-B CYT-1 mediate reorganization of the actin cytoskeleton and promote cell migration in response to NRG1. Isoform JM-A CYT-2 and isoform JM-B CYT-2 lack the phosphotyrosine that mediates interaction with PIK3R1, and hence do not phosphorylate PIK3R1, do not protect cells against apoptosis, and do not promote reorganization of the actin cytoskeleton and cell migration. Proteolytic processing of isoform JM-A CYT-1 and isoform JM-A CYT-2 gives rise to the corresponding soluble intracellular domains (4ICD) that translocate to the nucleus, promote nuclear import of STAT5A, activation of STAT5A, mammary epithelium differentiation, cell proliferation and activation of gene expression. The ERBB4 soluble intracellular domains (4ICD) colocalize with STAT5A at the CSN2 promoter to regulate transcription of milk proteins during lactation. The ERBB4 soluble intracellular domains can also translocate to mitochondria and promote apoptosis. This is Receptor tyrosine-protein kinase erbB-4 (ERBB4) from Homo sapiens (Human).